A 332-amino-acid chain; its full sequence is L-lactate dehydrogenase A chain (332 aa).

Ala-2 is modified (N-acetylalanine). Lys-5 is subject to N6-acetyllysine; alternate. The residue at position 5 (Lys-5) is an N6-succinyllysine; alternate. The residue at position 14 (Lys-14) is an N6-acetyllysine. Residue 29–57 participates in NAD(+) binding; the sequence is GAVGMACAISILMKDLADELALVDVMEDK. Lys-57 is subject to N6-acetyllysine; alternate. Lys-57 participates in a covalent cross-link: Glycyl lysine isopeptide (Lys-Gly) (interchain with G-Cter in SUMO2); alternate. At Lys-81 the chain carries N6-acetyllysine. Arg-99 contributes to the NAD(+) binding site. Arg-106 lines the substrate pocket. At Lys-118 the chain carries N6-acetyllysine; alternate. Position 118 is an N6-succinyllysine; alternate (Lys-118). N6-acetyllysine is present on Lys-126. Asn-138 contacts NAD(+). Asn-138 and Arg-169 together coordinate substrate. His-193 functions as the Proton acceptor in the catalytic mechanism. N6-acetyllysine is present on residues Lys-224 and Lys-232. At Tyr-239 the chain carries Phosphotyrosine. Position 243 is an N6-acetyllysine (Lys-243). Position 248 (Thr-248) interacts with substrate. Position 309 is a phosphothreonine (Thr-309). At Lys-318 the chain carries N6-acetyllysine; alternate. N6-succinyllysine; alternate is present on Lys-318. Thr-322 bears the Phosphothreonine mark.

Belongs to the LDH/MDH superfamily. LDH family. Homotetramer. Interacts with PTEN upstream reading frame protein MP31. ISGylated.

The protein localises to the cytoplasm. It carries out the reaction (S)-lactate + NAD(+) = pyruvate + NADH + H(+). It functions in the pathway fermentation; pyruvate fermentation to lactate; (S)-lactate from pyruvate: step 1/1. Its function is as follows. Interconverts simultaneously and stereospecifically pyruvate and lactate with concomitant interconversion of NADH and NAD(+). This Mus musculus (Mouse) protein is L-lactate dehydrogenase A chain (Ldha).